We begin with the raw amino-acid sequence, 270 residues long: 25S rRNA adenine-N(1) methyltransferase (270 aa).

Residues G111 and D131 each contribute to the S-adenosyl-L-methionine site.

Belongs to the BMT2 family.

The protein resides in the nucleus. The protein localises to the nucleolus. In terms of biological role, S-adenosyl-L-methionine-dependent methyltransferase that specifically methylates the N(1) position of an adenine present in helix 65 in 25S rRNA. The sequence is that of 25S rRNA adenine-N(1) methyltransferase from Schizosaccharomyces pombe (strain 972 / ATCC 24843) (Fission yeast).